The following is a 156-amino-acid chain: Large ribosomal subunit protein uL15 (156 aa).

The disordered stretch occupies residues 25-48 (RGIGCGKGKTSGRGHKGQKARSGV). The span at 34–43 (TSGRGHKGQK) shows a compositional bias: basic residues.

This sequence belongs to the universal ribosomal protein uL15 family. Part of the 50S ribosomal subunit.

Binds to the 23S rRNA. The protein is Large ribosomal subunit protein uL15 of Wolbachia pipientis subsp. Culex pipiens (strain wPip).